The primary structure comprises 690 residues: Guanylate cyclase soluble subunit alpha-1 (690 aa).

A Phosphoserine modification is found at S266. Residues T480–E607 form the Guanylate cyclase domain.

The protein belongs to the adenylyl cyclase class-4/guanylyl cyclase family. In terms of assembly, the active enzyme is formed by a heterodimer of an alpha and a beta subunit. Heterodimer with GUCY1B1. It depends on Mg(2+) as a cofactor. Mn(2+) serves as cofactor.

It is found in the cytoplasm. The catalysed reaction is GTP = 3',5'-cyclic GMP + diphosphate. Its activity is regulated as follows. Activated by nitric oxide in the presence of magnesium or manganese ions. In Rattus norvegicus (Rat), this protein is Guanylate cyclase soluble subunit alpha-1 (Gucy1a1).